Here is a 441-residue protein sequence, read N- to C-terminus: Putative F-box protein At1g33530 (441 aa).

Residues 91–137 (TTLAVELPDVLVEEILQRLPVKYLVRLKSISKGWKSLIESDHLAEKH) enclose the F-box domain.

The polypeptide is Putative F-box protein At1g33530 (Arabidopsis thaliana (Mouse-ear cress)).